The primary structure comprises 97 residues: Co-chaperonin GroES (97 aa).

It belongs to the GroES chaperonin family. Heptamer of 7 subunits arranged in a ring. Interacts with the chaperonin GroEL.

Its subcellular location is the cytoplasm. Together with the chaperonin GroEL, plays an essential role in assisting protein folding. The GroEL-GroES system forms a nano-cage that allows encapsulation of the non-native substrate proteins and provides a physical environment optimized to promote and accelerate protein folding. GroES binds to the apical surface of the GroEL ring, thereby capping the opening of the GroEL channel. This is Co-chaperonin GroES from Enterobacter sp. (strain 638).